Consider the following 419-residue polypeptide: UDP-N-acetylglucosamine 1-carboxyvinyltransferase 2 (419 aa).

Phosphoenolpyruvate is bound at residue K22–N23. R92 provides a ligand contact to UDP-N-acetyl-alpha-D-glucosamine. The Proton donor role is filled by C116. C116 is modified (2-(S-cysteinyl)pyruvic acid O-phosphothioketal). Residues R121–L125, D306, and I328 each bind UDP-N-acetyl-alpha-D-glucosamine.

It belongs to the EPSP synthase family. MurA subfamily.

The protein resides in the cytoplasm. It carries out the reaction phosphoenolpyruvate + UDP-N-acetyl-alpha-D-glucosamine = UDP-N-acetyl-3-O-(1-carboxyvinyl)-alpha-D-glucosamine + phosphate. Its pathway is cell wall biogenesis; peptidoglycan biosynthesis. In terms of biological role, cell wall formation. Adds enolpyruvyl to UDP-N-acetylglucosamine. This chain is UDP-N-acetylglucosamine 1-carboxyvinyltransferase 2, found in Streptococcus pneumoniae (strain ATCC BAA-255 / R6).